Reading from the N-terminus, the 529-residue chain is Glutamyl-tRNA(Gln) amidotransferase subunit B-2, chloroplastic/mitochondrial (529 aa).

A disordered region spans residues 17–61 (STRVSLPRGSIPPPPTSSSSSSSSSREGRRPRFFSTTTTSAERPV).

This sequence belongs to the GatB/GatE family. GatB subfamily. Subunit of the heterotrimeric GatCAB amidotransferase (AdT) complex, composed of A, B and C subunits.

Its subcellular location is the mitochondrion. It localises to the plastid. The protein resides in the chloroplast. It catalyses the reaction L-glutamyl-tRNA(Gln) + L-glutamine + ATP + H2O = L-glutaminyl-tRNA(Gln) + L-glutamate + ADP + phosphate + H(+). Functionally, allows the formation of correctly charged Gln-tRNA(Gln) through the transamidation of misacylated Glu-tRNA(Gln) in chloroplasts and mitochondria. The reaction takes place in the presence of glutamine and ATP through an activated gamma-phospho-Glu-tRNA(Gln). The chain is Glutamyl-tRNA(Gln) amidotransferase subunit B-2, chloroplastic/mitochondrial from Micromonas commoda (strain RCC299 / NOUM17 / CCMP2709) (Picoplanktonic green alga).